The chain runs to 172 residues: UPF0254 protein Mlab_1743 (172 aa).

It belongs to the UPF0254 family.

This Methanocorpusculum labreanum (strain ATCC 43576 / DSM 4855 / Z) protein is UPF0254 protein Mlab_1743.